The following is a 336-amino-acid chain: Holliday junction branch migration complex subunit RuvB (336 aa).

The segment at 1 to 182 (MKERIVNLET…FGMSFRMQFY (182 aa)) is large ATPase domain (RuvB-L). Residues leucine 21, arginine 22, glycine 63, lysine 66, threonine 67, serine 68, 129–131 (EDF), arginine 172, tyrosine 182, and arginine 219 each bind ATP. Threonine 67 contacts Mg(2+). The small ATPAse domain (RuvB-S) stretch occupies residues 183 to 253 (SPSELALIIK…ITLHALNELG (71 aa)). The tract at residues 256-336 (ELGFDEADLA…IPTLKSQSLF (81 aa)) is head domain (RuvB-H). The DNA site is built by arginine 310 and arginine 315.

Belongs to the RuvB family. As to quaternary structure, homohexamer. Forms an RuvA(8)-RuvB(12)-Holliday junction (HJ) complex. HJ DNA is sandwiched between 2 RuvA tetramers; dsDNA enters through RuvA and exits via RuvB. An RuvB hexamer assembles on each DNA strand where it exits the tetramer. Each RuvB hexamer is contacted by two RuvA subunits (via domain III) on 2 adjacent RuvB subunits; this complex drives branch migration. In the full resolvosome a probable DNA-RuvA(4)-RuvB(12)-RuvC(2) complex forms which resolves the HJ.

Its subcellular location is the cytoplasm. It catalyses the reaction ATP + H2O = ADP + phosphate + H(+). Functionally, the RuvA-RuvB-RuvC complex processes Holliday junction (HJ) DNA during genetic recombination and DNA repair, while the RuvA-RuvB complex plays an important role in the rescue of blocked DNA replication forks via replication fork reversal (RFR). RuvA specifically binds to HJ cruciform DNA, conferring on it an open structure. The RuvB hexamer acts as an ATP-dependent pump, pulling dsDNA into and through the RuvAB complex. RuvB forms 2 homohexamers on either side of HJ DNA bound by 1 or 2 RuvA tetramers; 4 subunits per hexamer contact DNA at a time. Coordinated motions by a converter formed by DNA-disengaged RuvB subunits stimulates ATP hydrolysis and nucleotide exchange. Immobilization of the converter enables RuvB to convert the ATP-contained energy into a lever motion, pulling 2 nucleotides of DNA out of the RuvA tetramer per ATP hydrolyzed, thus driving DNA branch migration. The RuvB motors rotate together with the DNA substrate, which together with the progressing nucleotide cycle form the mechanistic basis for DNA recombination by continuous HJ branch migration. Branch migration allows RuvC to scan DNA until it finds its consensus sequence, where it cleaves and resolves cruciform DNA. The chain is Holliday junction branch migration complex subunit RuvB from Helicobacter acinonychis (strain Sheeba).